Consider the following 59-residue polypeptide: Temporin-CDYd (59 aa).

The signal sequence occupies residues 1–22 (MFTLKKSMLLLLFLGTISLTLC). The propeptide occupies 23 to 42 (EEERDANEEEENGGEVKEEE).

It belongs to the frog skin active peptide (FSAP) family. Temporin subfamily. In terms of tissue distribution, expressed by the skin glands.

The protein resides in the secreted. In terms of biological role, antimicrobial peptide. The protein is Temporin-CDYd of Rana dybowskii (Dybovsky's frog).